A 217-amino-acid polypeptide reads, in one-letter code: Protein 33K (217 aa).

The tract at residues 1–142 (MPPKGNKQAI…KEKTSAIATR (142 aa)) is disordered. The span at 24 to 68 (QWDEEEESWDDSQAEEVSDEEEMESWESLDEELEDKPPKDEEEEI) shows a compositional bias: acidic residues. A compositionally biased stretch (low complexity) spans 69–78 (IASAAAPSSK). A compositionally biased stretch (basic and acidic residues) spans 123-136 (KRSEKTTRPRKEKT). The interval 160–187 (YAIFQQSRGQQLELKVKNRSLRSLTRSC) is necessary for nuclear subcellular location. Residues 166–186 (SRGQQLELKVKNRSLRSLTRS) form an RS-repeat; required for splicing enhancer activity region.

It belongs to the adenoviridae splicing factor family. In terms of assembly, homooligomer. Interacts with DBP; this interaction occurs at a unique vertex during genome packaging. Interacts with IVa2; this interaction occurs at a unique vertex during genome packaging and seems to potentiate IVa2 and 33K oligomerization. Phosphorylated in vitro by human PKA and PRKDC. PRKDC inhibits, whereas PKA activates the splicing factor.

It is found in the host nucleus. In terms of biological role, promotes alternative splicing of late transcripts by promoting splicing at weak 3' splice sites. Required for the temporal activation of major late pre-mRNA splicing at late times of infection. Induces the splicing and expression of the late capsid vertex protein. Probably functions as the small terminase that is part of the molecular motor that translocates genomic DNA in empty capsid during DNA packaging. This motor is located at a unique vertex and comprises at least the IVa2 ATPase, the small terminase 33K and probably a portal. Forms a ring-like structure of about 17 nm in which genomic DNA is translocated into the capsid. Stimulates IVa2 ATPase activity in the presence of the viral genome. Once the DNA is packaged, the terminase detaches: the 33K protein is present in the empty particles, but not in the mature virions. Also involved in virion assembly. This Human adenovirus F serotype 41 (HAdV-41) protein is Protein 33K.